The following is a 753-amino-acid chain: 5-methyltetrahydropteroyltriglutamate--homocysteine methyltransferase (753 aa).

5-methyltetrahydropteroyltri-L-glutamate contacts are provided by residues 17 to 20 (RELK) and Lys117. L-homocysteine contacts are provided by residues 431–433 (IGS) and Glu484. L-methionine-binding positions include 431-433 (IGS) and Glu484. 5-methyltetrahydropteroyltri-L-glutamate is bound by residues 515-516 (RC) and Trp561. Asp599 provides a ligand contact to L-homocysteine. Asp599 provides a ligand contact to L-methionine. Glu605 is a 5-methyltetrahydropteroyltri-L-glutamate binding site. The Zn(2+) site is built by His641, Cys643, and Glu665. The active-site Proton donor is the His694. Residue Cys726 coordinates Zn(2+).

Belongs to the vitamin-B12 independent methionine synthase family. Monomer. It depends on Zn(2+) as a cofactor.

It catalyses the reaction 5-methyltetrahydropteroyltri-L-glutamate + L-homocysteine = tetrahydropteroyltri-L-glutamate + L-methionine. Its pathway is amino-acid biosynthesis; L-methionine biosynthesis via de novo pathway; L-methionine from L-homocysteine (MetE route): step 1/1. Functionally, catalyzes the transfer of a methyl group from 5-methyltetrahydrofolate to homocysteine resulting in methionine formation. The sequence is that of 5-methyltetrahydropteroyltriglutamate--homocysteine methyltransferase from Escherichia coli (strain K12).